A 122-amino-acid chain; its full sequence is Defensin-like protein 181 (122 aa).

The N-terminal stretch at 1 to 26 (MERIPSLASLVSLLIIFATVVNQTRA) is a signal peptide. 8 cysteine pairs are disulfide-bonded: Cys29–Cys70, Cys36–Cys55, Cys39–Cys64, Cys43–Cys66, Cys76–Cys122, Cys87–Cys107, Cys92–Cys116, and Cys96–Cys118.

Belongs to the DEFL family.

It localises to the secreted. Functionally, confers broad-spectrum resistance to pathogens. The chain is Defensin-like protein 181 (PDF3.1) from Arabidopsis thaliana (Mouse-ear cress).